Here is a 630-residue protein sequence, read N- to C-terminus: tRNA uridine 5-carboxymethylaminomethyl modification enzyme MnmG (630 aa).

Gly-13 to Gly-18 is a binding site for FAD. Gly-273–Phe-287 serves as a coordination point for NAD(+).

The protein belongs to the MnmG family. Homodimer. Heterotetramer of two MnmE and two MnmG subunits. Requires FAD as cofactor.

It localises to the cytoplasm. Its function is as follows. NAD-binding protein involved in the addition of a carboxymethylaminomethyl (cmnm) group at the wobble position (U34) of certain tRNAs, forming tRNA-cmnm(5)s(2)U34. The protein is tRNA uridine 5-carboxymethylaminomethyl modification enzyme MnmG of Pseudomonas aeruginosa (strain ATCC 15692 / DSM 22644 / CIP 104116 / JCM 14847 / LMG 12228 / 1C / PRS 101 / PAO1).